The chain runs to 77 residues: Large ribosomal subunit protein bL28 (77 aa).

The protein belongs to the bacterial ribosomal protein bL28 family.

This chain is Large ribosomal subunit protein bL28, found in Laribacter hongkongensis (strain HLHK9).